We begin with the raw amino-acid sequence, 133 residues long: Snaclec purpureotin subunit alpha (133 aa).

3 disulfides stabilise this stretch: C2-C13, C30-C127, and C102-C119. One can recognise a C-type lectin domain in the interval F9–K128.

This sequence belongs to the snaclec family. As to quaternary structure, homodimer (non-covalently linked) of heterodimer of alpha and beta subunits (disulfide-linked). As to expression, expressed by the venom gland.

The protein localises to the secreted. Functionally, snaclec that induces platelet aggregation without any cofactor in a dose-dependent manner. Its platelet aggregation effect is blocked by echicetin, suggesting it is a GPIb-binding protein which binds to the same or a closely related GPIb site on platelets as echicetin. In Trimeresurus purpureomaculatus (Mangrove pit viper), this protein is Snaclec purpureotin subunit alpha.